A 333-amino-acid chain; its full sequence is Cytochrome f (333 aa).

A signal peptide spans 1–44 (MRNASVTARLTRSVRAIVKTLLIAIATVTFYFSCDLALPQSAAA). Residues Tyr45, Cys66, Cys69, and His70 each contribute to the heme site. Residues 301–318 (GLIAFVALVMLAQVMLVL) traverse the membrane as a helical segment.

This sequence belongs to the cytochrome f family. As to quaternary structure, the 4 large subunits of the cytochrome b6-f complex are cytochrome b6, subunit IV (17 kDa polypeptide, PetD), cytochrome f and the Rieske protein, while the 4 small subunits are PetG, PetL, PetM and PetN. The complex functions as a dimer. It depends on heme as a cofactor.

The protein localises to the cellular thylakoid membrane. Functionally, component of the cytochrome b6-f complex, which mediates electron transfer between photosystem II (PSII) and photosystem I (PSI), cyclic electron flow around PSI, and state transitions. The chain is Cytochrome f (petA) from Desmonostoc sp. (strain PCC 7906) (Nostoc sp. (strain PCC 7906)).